The primary structure comprises 404 residues: Nuclear receptor subfamily 2 group F member 6 (404 aa).

A compositionally biased stretch (gly residues) spans 1-15 (MAMVTGGWGGPGGDT). The interval 1–49 (MAMVTGGWGGPGGDTNGVDKAGGYPRAAEDDSASPPGAASDAEPGDEER) is disordered. The segment covering 33–42 (ASPPGAASDA) has biased composition (low complexity). Phosphoserine is present on residues serine 34 and serine 40. A DNA-binding region (nuclear receptor) is located at residues 53 to 128 (QVDCVVCGDK…VGMRKEAVQR (76 aa)). Residues 56-76 (CVVCGDKSSGKHYGVFTCEGC) form an NR C4-type zinc finger. Serine 83 carries the post-translational modification Phosphoserine. The NR C4-type zinc-finger motif lies at 92–116 (CRSNRDCQIDQHHRNQCQYCRLKKC). Residues 165 to 393 (PVSELIAQLL…TLIRDMLLSG (229 aa)) enclose the NR LBD domain. The segment at 327 to 404 (LQEKAQVALT…TFNWPYGSGQ (78 aa)) is important for dimerization.

Belongs to the nuclear hormone receptor family. NR2 subfamily. In terms of assembly, binds DNA as dimer; homodimer and heterodimer with NR2F2 and probably NR2F1. Interacts with THRB. In terms of tissue distribution, expressed in heart, placenta, liver, skeletal muscle, kidney and pancreas.

It is found in the nucleus. Transcription factor predominantly involved in transcriptional repression. Binds to promoter/enhancer response elements that contain the imperfect 5'-AGGTCA-3' direct or inverted repeats with various spacings which are also recognized by other nuclear hormone receptors. Involved in modulation of hormonal responses. Represses transcriptional activity of the lutropin-choriogonadotropic hormone receptor/LHCGR gene, the renin/REN gene and the oxytocin-neurophysin/OXT gene. Represses the triiodothyronine-dependent and -independent transcriptional activity of the thyroid hormone receptor gene in a cell type-specific manner. The corepressing function towards thyroid hormone receptor beta/THRB involves at least in part the inhibition of THRB binding to triiodothyronine response elements (TREs) by NR2F6. Inhibits NFATC transcription factor DNA binding and subsequently its transcriptional activity. Acts as transcriptional repressor of IL-17 expression in Th-17 differentiated CD4(+) T cells and may be involved in induction and/or maintenance of peripheral immunological tolerance and autoimmunity. Involved in development of forebrain circadian clock; is required early in the development of the locus coeruleus (LC). The chain is Nuclear receptor subfamily 2 group F member 6 (NR2F6) from Homo sapiens (Human).